The following is a 267-amino-acid chain: Acyl-[acyl-carrier-protein]--UDP-N-acetylglucosamine O-acyltransferase (267 aa).

Belongs to the transferase hexapeptide repeat family. LpxA subfamily. In terms of assembly, homotrimer.

It localises to the cytoplasm. The enzyme catalyses a (3R)-hydroxyacyl-[ACP] + UDP-N-acetyl-alpha-D-glucosamine = a UDP-3-O-[(3R)-3-hydroxyacyl]-N-acetyl-alpha-D-glucosamine + holo-[ACP]. The protein operates within glycolipid biosynthesis; lipid IV(A) biosynthesis; lipid IV(A) from (3R)-3-hydroxytetradecanoyl-[acyl-carrier-protein] and UDP-N-acetyl-alpha-D-glucosamine: step 1/6. Involved in the biosynthesis of lipid A, a phosphorylated glycolipid that anchors the lipopolysaccharide to the outer membrane of the cell. This Cupriavidus metallidurans (strain ATCC 43123 / DSM 2839 / NBRC 102507 / CH34) (Ralstonia metallidurans) protein is Acyl-[acyl-carrier-protein]--UDP-N-acetylglucosamine O-acyltransferase.